The following is a 102-amino-acid chain: MGKVLRKPFAKAVPLLFLAATWLLTGVLPAGASSPTNAAAASLTEAQDQFYSYTCNADTFSPSLTSFASIWALLTLVLVIIASAIYLMYVCFNKFVNTLLTD.

A signal peptide spans 1–32 (MGKVLRKPFAKAVPLLFLAATWLLTGVLPAGA). Residues 33–69 (SSPTNAAAASLTEAQDQFYSYTCNADTFSPSLTSFAS) are Virion surface-facing. A helical transmembrane segment spans residues 70–90 (IWALLTLVLVIIASAIYLMYV). Topologically, residues 91 to 102 (CFNKFVNTLLTD) are intravirion.

The protein belongs to the herpesviridae glycoprotein N family. As to quaternary structure, interacts (via N-terminus) with gM (via N-terminus). The gM-gN heterodimer forms the gCII complex. In terms of processing, O-glycosylated. Contains alpha 2,6-sialic acid residues.

The protein resides in the virion membrane. It is found in the host membrane. It localises to the host Golgi apparatus. The protein localises to the host trans-Golgi network. Envelope glycoprotein necessary for proper maturation of gM and modulation of its membrane fusion activity. Also plays a critical role in virion morphogenesis. The chain is Envelope glycoprotein N from Epstein-Barr virus (strain AG876) (HHV-4).